Here is a 160-residue protein sequence, read N- to C-terminus: Transcriptional regulator MraZ (160 aa).

SpoVT-AbrB domains follow at residues 5 to 50 and 93 to 136; these read KFET…EGVY and AIEC…SQAE.

The protein belongs to the MraZ family. In terms of assembly, forms oligomers.

The protein resides in the cytoplasm. The protein localises to the nucleoid. The protein is Transcriptional regulator MraZ of Geotalea uraniireducens (strain Rf4) (Geobacter uraniireducens).